The primary structure comprises 95 residues: MKLQLFAHKKGVGSSRNGRDSESKRLGVKRADGQFVLAGNILVRQRGTKIHPGVNVGKGKDDTLFALIDGYVTFERKGRDKKQVSVYPERKVAQN.

Positions 1-6 (MKLQLF) are excised as a propeptide. The tract at residues 1-25 (MKLQLFAHKKGVGSSRNGRDSESKR) is disordered.

This sequence belongs to the bacterial ribosomal protein bL27 family. Post-translationally, the N-terminus is cleaved by ribosomal processing cysteine protease Prp.

The protein is Large ribosomal subunit protein bL27 of Thermoanaerobacter pseudethanolicus (strain ATCC 33223 / 39E) (Clostridium thermohydrosulfuricum).